Here is a 500-residue protein sequence, read N- to C-terminus: Maturase K (500 aa).

Belongs to the intron maturase 2 family. MatK subfamily.

The protein resides in the plastid. Its subcellular location is the chloroplast. Functionally, usually encoded in the trnK tRNA gene intron. Probably assists in splicing its own and other chloroplast group II introns. The chain is Maturase K from Argentina anserina (Silverweed cinquefoil).